A 260-amino-acid polypeptide reads, in one-letter code: Zinc import ATP-binding protein ZnuC (260 aa).

The 216-residue stretch at 14 to 229 (LTARNLCADR…PEFARLFGDQ (216 aa)) folds into the ABC transporter domain. An ATP-binding site is contributed by 46–53 (GPNGAGKS).

This sequence belongs to the ABC transporter superfamily. Zinc importer (TC 3.A.1.15.5) family. In terms of assembly, the complex is composed of two ATP-binding proteins (ZnuC), two transmembrane proteins (ZnuB) and a solute-binding protein (ZnuA).

The protein resides in the cell inner membrane. It catalyses the reaction Zn(2+)(out) + ATP(in) + H2O(in) = Zn(2+)(in) + ADP(in) + phosphate(in) + H(+)(in). Functionally, part of the ABC transporter complex ZnuABC involved in zinc import. Responsible for energy coupling to the transport system. The polypeptide is Zinc import ATP-binding protein ZnuC (Magnetococcus marinus (strain ATCC BAA-1437 / JCM 17883 / MC-1)).